The following is a 188-amino-acid chain: Ubiquitin-like protein 4B (188 aa).

The Ubiquitin-like domain maps to Met-1 to Asp-76. The segment at Glu-146–Gln-188 is disordered. The span at Asn-161–Gly-174 shows a compositional bias: gly residues.

In terms of tissue distribution, expressed specifically in post-meiotic male germ cells of the testis. Abundantly expressed in stage 14-16 spermatids.

The protein resides in the cytoplasm. The chain is Ubiquitin-like protein 4B (Ubl4b) from Mus musculus (Mouse).